Reading from the N-terminus, the 102-residue chain is Large ribosomal subunit protein bL21 (102 aa).

It belongs to the bacterial ribosomal protein bL21 family. Part of the 50S ribosomal subunit. Contacts protein L20.

Its function is as follows. This protein binds to 23S rRNA in the presence of protein L20. The chain is Large ribosomal subunit protein bL21 from Geotalea uraniireducens (strain Rf4) (Geobacter uraniireducens).